A 160-amino-acid chain; its full sequence is Cyclic pyranopterin monophosphate synthase (160 aa).

Substrate is bound by residues 75 to 77 (MCH) and 116 to 117 (ME). D131 is an active-site residue.

This sequence belongs to the MoaC family. As to quaternary structure, homohexamer; trimer of dimers.

The enzyme catalyses (8S)-3',8-cyclo-7,8-dihydroguanosine 5'-triphosphate = cyclic pyranopterin phosphate + diphosphate. It participates in cofactor biosynthesis; molybdopterin biosynthesis. Its function is as follows. Catalyzes the conversion of (8S)-3',8-cyclo-7,8-dihydroguanosine 5'-triphosphate to cyclic pyranopterin monophosphate (cPMP). In Staphylococcus haemolyticus (strain JCSC1435), this protein is Cyclic pyranopterin monophosphate synthase.